We begin with the raw amino-acid sequence, 322 residues long: Transaldolase (322 aa).

Lys132 acts as the Schiff-base intermediate with substrate in catalysis. Phosphoserine occurs at positions 268 and 269.

It belongs to the transaldolase family. Type 1 subfamily. As to quaternary structure, homodimer.

The catalysed reaction is D-sedoheptulose 7-phosphate + D-glyceraldehyde 3-phosphate = D-erythrose 4-phosphate + beta-D-fructose 6-phosphate. Its pathway is carbohydrate degradation; pentose phosphate pathway; D-glyceraldehyde 3-phosphate and beta-D-fructose 6-phosphate from D-ribose 5-phosphate and D-xylulose 5-phosphate (non-oxidative stage): step 2/3. In terms of biological role, transaldolase is important for the balance of metabolites in the pentose-phosphate pathway. This Schizosaccharomyces pombe (strain 972 / ATCC 24843) (Fission yeast) protein is Transaldolase (tal1).